Reading from the N-terminus, the 111-residue chain is RNA polymerase-binding protein RbpA (111 aa).

Belongs to the RNA polymerase-binding protein RbpA family. Forms a complex with the RNAP catalytic core and with free principal sigma factors.

Functionally, binds to RNA polymerase (RNAP), stimulating transcription from principal, but not alternative sigma factor promoters. This is RNA polymerase-binding protein RbpA from Mycobacterium tuberculosis (strain CDC 1551 / Oshkosh).